The following is a 239-amino-acid chain: Large ribosomal subunit protein uL2 (239 aa).

Belongs to the universal ribosomal protein uL2 family.

It is found in the cytoplasm. The sequence is that of Large ribosomal subunit protein uL2 (RPL8) from Encephalitozoon cuniculi (strain GB-M1) (Microsporidian parasite).